Here is a 204-residue protein sequence, read N- to C-terminus: Methylthioribulose-1-phosphate dehydratase (204 aa).

Residues His-94 and His-96 each coordinate Zn(2+).

Belongs to the aldolase class II family. MtnB subfamily. It depends on Zn(2+) as a cofactor.

It catalyses the reaction 5-(methylsulfanyl)-D-ribulose 1-phosphate = 5-methylsulfanyl-2,3-dioxopentyl phosphate + H2O. Its pathway is amino-acid biosynthesis; L-methionine biosynthesis via salvage pathway; L-methionine from S-methyl-5-thio-alpha-D-ribose 1-phosphate: step 2/6. Catalyzes the dehydration of methylthioribulose-1-phosphate (MTRu-1-P) into 2,3-diketo-5-methylthiopentyl-1-phosphate (DK-MTP-1-P). In Pseudomonas syringae pv. syringae (strain B728a), this protein is Methylthioribulose-1-phosphate dehydratase.